The primary structure comprises 278 residues: Probable NADP-dependent mannitol dehydrogenase (278 aa).

NADP(+)-binding residues include isoleucine 45, asparagine 117, and lysine 152. Residues serine 171 and tyrosine 186 each act as proton donor in the active site. NADP(+)-binding residues include tyrosine 186, lysine 190, and threonine 220. Lysine 190 acts as the Lowers pKa of active site Tyr in catalysis.

It belongs to the short-chain dehydrogenases/reductases (SDR) family. In terms of assembly, homotetramer.

It catalyses the reaction D-mannitol + NADP(+) = D-fructose + NADPH + H(+). Functionally, versatile oxidoreductase that catalyzes the oxidation and reduction of polar as well as non-polar substrates at a very broad pH range. Preferentially oxidizes secondary alcohols. Has highest activity for racemic 2-heptanol and racemic octanol. Is also an efficient reductase for selected substrates. Substrate selectivity was found for medium chain length ketones with the carbonyl function at position C-2. Has highest activities for ribulose and fructose. The enzyme is (R)-selective in the reduction direction and produces exclusively the (R)-enantiomer. This chain is Probable NADP-dependent mannitol dehydrogenase, found in Yarrowia lipolytica (strain CLIB 122 / E 150) (Yeast).